Reading from the N-terminus, the 580-residue chain is Arginine--tRNA ligase (580 aa).

The 'HIGH' region signature appears at 131 to 141 (ANPTGPLHVGH).

The protein belongs to the class-I aminoacyl-tRNA synthetase family. In terms of assembly, monomer.

The protein resides in the cytoplasm. It catalyses the reaction tRNA(Arg) + L-arginine + ATP = L-arginyl-tRNA(Arg) + AMP + diphosphate. The chain is Arginine--tRNA ligase from Roseobacter denitrificans (strain ATCC 33942 / OCh 114) (Erythrobacter sp. (strain OCh 114)).